We begin with the raw amino-acid sequence, 486 residues long: mRNA cap guanine-N(7) methyltransferase (486 aa).

The segment at M1–A92 is disordered. Composition is skewed to basic and acidic residues over residues E9–H28, V35–R54, and E82–A92. One can recognise an mRNA cap 0 methyltransferase domain in the interval S135 to V486. N144–N145 lines the mRNA pocket. Residues K148, G177, D201, D247, M281–C283, and Y286 contribute to the S-adenosyl-L-methionine site. The span at V333–G351 shows a compositional bias: basic and acidic residues. Residues V333 to E365 form a disordered region. Over residues G352 to E363 the composition is skewed to acidic residues.

Belongs to the class I-like SAM-binding methyltransferase superfamily. mRNA cap 0 methyltransferase family.

It is found in the nucleus. The catalysed reaction is a 5'-end (5'-triphosphoguanosine)-ribonucleoside in mRNA + S-adenosyl-L-methionine = a 5'-end (N(7)-methyl 5'-triphosphoguanosine)-ribonucleoside in mRNA + S-adenosyl-L-homocysteine. In terms of biological role, responsible for methylating the 5'-cap structure of mRNAs. The polypeptide is mRNA cap guanine-N(7) methyltransferase (ABD1) (Pyricularia oryzae (strain 70-15 / ATCC MYA-4617 / FGSC 8958) (Rice blast fungus)).